The chain runs to 279 residues: Phycobilisome 34.5 kDa linker polypeptide, phycoerythrocyanin-associated, rod (279 aa).

In terms of domain architecture, PBS-linker spans 2–178; it reads STSVAERLAI…LYRGRANSDN (177 aa). Positions 226–278 constitute a CpcD-like domain; the sequence is ARMFIVEAIAGTLNTNVAVRRSRQVYTVPYDRLSATYQEIHKRGGKIVKITPA.

It belongs to the phycobilisome linker protein family.

The protein resides in the cellular thylakoid membrane. Functionally, rod linker protein, associated with phycoerythrocyanin. Linker polypeptides determine the state of aggregation and the location of the disk-shaped phycobiliprotein units within the phycobilisome and modulate their spectroscopic properties in order to mediate a directed and optimal energy transfer. The sequence is that of Phycobilisome 34.5 kDa linker polypeptide, phycoerythrocyanin-associated, rod (pecC) from Mastigocladus laminosus (Fischerella sp.).